The chain runs to 146 residues: Large ribosomal subunit protein uL15 (146 aa).

The segment covering 1-13 (MKLHELKPAEGSR) has biased composition (basic and acidic residues). Residues 1-47 (MKLHELKPAEGSRKSRKRIGRGTGSGLGRNAGKGEKGQKARAGGGVR) are disordered. Residues 21 to 31 (RGTGSGLGRNA) are compositionally biased toward gly residues.

Belongs to the universal ribosomal protein uL15 family. Part of the 50S ribosomal subunit.

Binds to the 23S rRNA. The polypeptide is Large ribosomal subunit protein uL15 (Clostridium kluyveri (strain NBRC 12016)).